Reading from the N-terminus, the 238-residue chain is B-box zinc finger protein 25 (238 aa).

The Zn(2+) site is built by Cys-5, Cys-8, Cys-28, His-33, Cys-57, Cys-60, Cys-80, and His-85. A B box-type 1; atypical zinc finger spans residues 5–47; the sequence is CDVCEKAPATLICCADEAALCAKCDVEVHAANKLASKHQRLFL. A B box-type 2; atypical zinc finger spans residues 57–99; sequence CDICLEKAAFIFCVEDRALLCRDCDEATHAPNTRSANHQRFLA. Residues 115–139 form a disordered region; it reads VEKNHFDPSNQQSLSKPPTQQPAAP. The span at 121–137 shows a compositional bias: polar residues; the sequence is DPSNQQSLSKPPTQQPA. The segment at 226–238 is interaction with COP1; sequence DDEEEHFLVPDLG.

As to quaternary structure, interacts with COP1 WD40 domain. Interacts with HY5 and HYH. In terms of processing, COP1-mediated ubiquitination and subsequent proteasomal degradation of BBX25/STH occurs in the dark.

Its subcellular location is the nucleus. Functionally, acts as a negative regulator of seedling photomorphogenesis. BBX25/STH and BBX24/STO function as transcriptional corepressors of HY5 activity, leading to the down-regulation of BBX22 expression. BBX25/STH acts additively with BBX24/STO during de-etiolation and the hypocotyl shade avoidance response. This chain is B-box zinc finger protein 25, found in Arabidopsis thaliana (Mouse-ear cress).